Reading from the N-terminus, the 96-residue chain is Nucleoid-associated protein TC_0612 (96 aa).

It belongs to the YbaB/EbfC family. As to quaternary structure, homodimer.

It is found in the cytoplasm. The protein localises to the nucleoid. In terms of biological role, binds to DNA and alters its conformation. May be involved in regulation of gene expression, nucleoid organization and DNA protection. In Chlamydia muridarum (strain MoPn / Nigg), this protein is Nucleoid-associated protein TC_0612.